The sequence spans 433 residues: Ribosome biogenesis protein WDR12 homolog (433 aa).

The ubiquitin-like (UBL) domain stretch occupies residues 21–102; that stretch reads VEVFVVSYRH…ESVISIECIV (82 aa). WD repeat units lie at residues 114-151, 153-194, 203-242, 270-310, 312-351, 357-397, and 401-433; these read ALLD…LTSS, LHEE…SSTF, GHER…TSTV, GHKD…QINT, AAKK…GTLV, GHCG…TPLY, and GHSD…RRKM.

Belongs to the WD repeat WDR12/YTM1 family.

It localises to the nucleus. The protein localises to the nucleolus. Its subcellular location is the nucleoplasm. Its function is as follows. Required for maturation of ribosomal RNAs and formation of the large ribosomal subunit. The protein is Ribosome biogenesis protein WDR12 homolog of Brugia malayi (Filarial nematode worm).